The chain runs to 167 residues: ATP synthase subunit b (167 aa).

Residues 9–29 (ALPLGNMLFIIIAFLLLMLIL) form a helical membrane-spanning segment.

It belongs to the ATPase B chain family. In terms of assembly, F-type ATPases have 2 components, F(1) - the catalytic core - and F(0) - the membrane proton channel. F(1) has five subunits: alpha(3), beta(3), gamma(1), delta(1), epsilon(1). F(0) has three main subunits: a(1), b(2) and c(10-14). The alpha and beta chains form an alternating ring which encloses part of the gamma chain. F(1) is attached to F(0) by a central stalk formed by the gamma and epsilon chains, while a peripheral stalk is formed by the delta and b chains.

It is found in the cell membrane. F(1)F(0) ATP synthase produces ATP from ADP in the presence of a proton or sodium gradient. F-type ATPases consist of two structural domains, F(1) containing the extramembraneous catalytic core and F(0) containing the membrane proton channel, linked together by a central stalk and a peripheral stalk. During catalysis, ATP synthesis in the catalytic domain of F(1) is coupled via a rotary mechanism of the central stalk subunits to proton translocation. Its function is as follows. Component of the F(0) channel, it forms part of the peripheral stalk, linking F(1) to F(0). The chain is ATP synthase subunit b from Leuconostoc mesenteroides subsp. mesenteroides (strain ATCC 8293 / DSM 20343 / BCRC 11652 / CCM 1803 / JCM 6124 / NCDO 523 / NBRC 100496 / NCIMB 8023 / NCTC 12954 / NRRL B-1118 / 37Y).